The sequence spans 283 residues: Phosphatidylglycerol--prolipoprotein diacylglyceryl transferase (283 aa).

Helical transmembrane passes span L18–G38, L59–Y79, I91–A111, I124–L144, T185–W205, Y213–E233, and G251–I271. R143 contributes to the a 1,2-diacyl-sn-glycero-3-phospho-(1'-sn-glycerol) binding site.

This sequence belongs to the Lgt family.

It localises to the cell inner membrane. The enzyme catalyses L-cysteinyl-[prolipoprotein] + a 1,2-diacyl-sn-glycero-3-phospho-(1'-sn-glycerol) = an S-1,2-diacyl-sn-glyceryl-L-cysteinyl-[prolipoprotein] + sn-glycerol 1-phosphate + H(+). The protein operates within protein modification; lipoprotein biosynthesis (diacylglyceryl transfer). Catalyzes the transfer of the diacylglyceryl group from phosphatidylglycerol to the sulfhydryl group of the N-terminal cysteine of a prolipoprotein, the first step in the formation of mature lipoproteins. The sequence is that of Phosphatidylglycerol--prolipoprotein diacylglyceryl transferase from Porphyromonas gingivalis (strain ATCC 33277 / DSM 20709 / CIP 103683 / JCM 12257 / NCTC 11834 / 2561).